Reading from the N-terminus, the 208-residue chain is Small ribosomal subunit protein uS4 (208 aa).

The 64-residue stretch at 98 to 161 folds into the S4 RNA-binding domain; that stretch reads TRLDNTVYRL…RKIPVIAEAQ (64 aa).

It belongs to the universal ribosomal protein uS4 family. In terms of assembly, part of the 30S ribosomal subunit. Contacts protein S5. The interaction surface between S4 and S5 is involved in control of translational fidelity.

Functionally, one of the primary rRNA binding proteins, it binds directly to 16S rRNA where it nucleates assembly of the body of the 30S subunit. In terms of biological role, with S5 and S12 plays an important role in translational accuracy. The polypeptide is Small ribosomal subunit protein uS4 (Maridesulfovibrio salexigens (strain ATCC 14822 / DSM 2638 / NCIMB 8403 / VKM B-1763) (Desulfovibrio salexigens)).